Reading from the N-terminus, the 557-residue chain is Potassium-transporting ATPase potassium-binding subunit (557 aa).

12 helical membrane-spanning segments follow: residues 5-25 (GFLL…PLGS), 63-83 (LCAI…MLLG), 132-152 (GLTV…FALI), 170-190 (LLRI…LFFI), 253-273 (FVQM…FGEV), 283-303 (LLWA…WAEV), 329-349 (VLVS…AVIA), 356-376 (ALGG…FGGV), 379-399 (GLYG…LMIG), 416-436 (LTAL…ALAM), 484-504 (LLAF…MAIA), and 526-546 (LFVG…FIPA).

The protein belongs to the KdpA family. In terms of assembly, the system is composed of three essential subunits: KdpA, KdpB and KdpC.

It is found in the cell inner membrane. In terms of biological role, part of the high-affinity ATP-driven potassium transport (or Kdp) system, which catalyzes the hydrolysis of ATP coupled with the electrogenic transport of potassium into the cytoplasm. This subunit binds the periplasmic potassium ions and delivers the ions to the membrane domain of KdpB through an intramembrane tunnel. This Escherichia coli O17:K52:H18 (strain UMN026 / ExPEC) protein is Potassium-transporting ATPase potassium-binding subunit.